Consider the following 75-residue polypeptide: Alpha-elapitoxin-Bc2b (75 aa).

The N-terminal stretch at Tyr1–Thr2 is a signal peptide. 5 disulfide bridges follow: Cys5–Cys24, Cys17–Cys45, Cys30–Cys34, Cys49–Cys60, and Cys61–Cys66.

Monomer in solution, homodimer in crystal state. In terms of tissue distribution, expressed by the venom gland.

Its subcellular location is the secreted. Binds to muscular and neuronal nicotinic acetylcholine receptor (nAChR) and inhibits acetylcholine from binding to the receptor, thereby impairing neuromuscular and neuronal transmission. Blocks muscle type nAChR. Also binds with high affinity to alpha-7/CHRNA7 nAChRs. In addition, shows a weak inhibition of neuronal alpha-3-beta-2/CHRNA3-CHRNB2 nAChR. Selectively binds to alpha-1-delta subunit interface of the mouse muscle nicotinic acetylcholine receptor, with a 10-fold higher affinity for the adult than for the fetal receptors. In vivo, when intraperitoneally injected into mice, causes flaccid paralysis and respiratory distress, followed by death within 2-4 hours. The protein is Alpha-elapitoxin-Bc2b of Bungarus candidus (Malayan krait).